The chain runs to 185 residues: Large ribosomal subunit protein uL5 (185 aa).

This sequence belongs to the universal ribosomal protein uL5 family. In terms of assembly, part of the 50S ribosomal subunit; part of the 5S rRNA/L5/L18/L25 subcomplex. Contacts the 5S rRNA and the P site tRNA. Forms a bridge to the 30S subunit in the 70S ribosome.

Functionally, this is one of the proteins that bind and probably mediate the attachment of the 5S RNA into the large ribosomal subunit, where it forms part of the central protuberance. In the 70S ribosome it contacts protein S13 of the 30S subunit (bridge B1b), connecting the 2 subunits; this bridge is implicated in subunit movement. Contacts the P site tRNA; the 5S rRNA and some of its associated proteins might help stabilize positioning of ribosome-bound tRNAs. This chain is Large ribosomal subunit protein uL5, found in Rhizobium rhizogenes (strain K84 / ATCC BAA-868) (Agrobacterium radiobacter).